Reading from the N-terminus, the 270-residue chain is ATP synthase subunit a (270 aa).

The next 5 membrane-spanning stretches (helical) occupy residues 40 to 60 (IDSL…FYAV), 98 to 118 (IAPL…MDLV), 143 to 163 (DVNI…YYSI), 208 to 228 (LFGN…MLPW), and 239 to 259 (AIFH…LTIV).

Belongs to the ATPase A chain family. F-type ATPases have 2 components, CF(1) - the catalytic core - and CF(0) - the membrane proton channel. CF(1) has five subunits: alpha(3), beta(3), gamma(1), delta(1), epsilon(1). CF(0) has three main subunits: a(1), b(2) and c(9-12). The alpha and beta chains form an alternating ring which encloses part of the gamma chain. CF(1) is attached to CF(0) by a central stalk formed by the gamma and epsilon chains, while a peripheral stalk is formed by the delta and b chains.

It localises to the cell inner membrane. Its function is as follows. Key component of the proton channel; it plays a direct role in the translocation of protons across the membrane. This Vibrio vulnificus (strain CMCP6) protein is ATP synthase subunit a.